The sequence spans 100 residues: Small ribosomal subunit protein uS14c (100 aa).

This sequence belongs to the universal ribosomal protein uS14 family. As to quaternary structure, part of the 30S ribosomal subunit.

It localises to the plastid. Its subcellular location is the chloroplast. In terms of biological role, binds 16S rRNA, required for the assembly of 30S particles. The protein is Small ribosomal subunit protein uS14c of Fagopyrum esculentum subsp. ancestrale (Wild buckwheat).